Here is a 385-residue protein sequence, read N- to C-terminus: 3-hydroxyisobutyryl-CoA hydrolase, mitochondrial (385 aa).

Residues Met1–Thr32 constitute a mitochondrion transit peptide. Lys54, Lys91, and Lys100 each carry N6-acetyllysine; alternate. 3 positions are modified to N6-succinyllysine; alternate: Lys54, Lys91, and Lys100. Glu120, Gly145, Glu168, and Asp176 together coordinate substrate. Lys220 is subject to N6-acetyllysine; alternate. Lys220 carries the post-translational modification N6-succinyllysine; alternate. Position 233 is a phosphoserine (Ser233). N6-succinyllysine is present on residues Lys249 and Lys256. Lys296 is modified (N6-acetyllysine; alternate). Lys296 carries the N6-succinyllysine; alternate modification. Position 300 is an N6-succinyllysine (Lys300). At Lys352 the chain carries N6-acetyllysine; alternate. The residue at position 352 (Lys352) is an N6-succinyllysine; alternate. Residues Lys359 and Lys364 each carry the N6-acetyllysine modification. Residue Lys376 is modified to N6-succinyllysine.

It belongs to the enoyl-CoA hydratase/isomerase family.

It localises to the mitochondrion. It catalyses the reaction 3-hydroxy-2-methylpropanoyl-CoA + H2O = 3-hydroxy-2-methylpropanoate + CoA + H(+). Its pathway is amino-acid degradation; L-valine degradation. In terms of biological role, hydrolyzes 3-hydroxyisobutyryl-CoA (HIBYL-CoA), a saline catabolite. Has high activity toward isobutyryl-CoA. Could be an isobutyryl-CoA dehydrogenase that functions in valine catabolism. Also hydrolyzes 3-hydroxypropanoyl-CoA. In Mus musculus (Mouse), this protein is 3-hydroxyisobutyryl-CoA hydrolase, mitochondrial (Hibch).